A 93-amino-acid chain; its full sequence is CRISPR-associated endoribonuclease Cas2 1 (93 aa).

Position 8 (D8) interacts with Mg(2+).

The protein belongs to the CRISPR-associated endoribonuclease Cas2 protein family. In terms of assembly, homodimer, forms a heterotetramer with a Cas1 homodimer. The cofactor is Mg(2+).

In terms of biological role, CRISPR (clustered regularly interspaced short palindromic repeat), is an adaptive immune system that provides protection against mobile genetic elements (viruses, transposable elements and conjugative plasmids). CRISPR clusters contain sequences complementary to antecedent mobile elements and target invading nucleic acids. CRISPR clusters are transcribed and processed into CRISPR RNA (crRNA). Functions as a ssRNA-specific endoribonuclease. Involved in the integration of spacer DNA into the CRISPR cassette. The protein is CRISPR-associated endoribonuclease Cas2 1 of Chloroflexus aurantiacus (strain ATCC 29366 / DSM 635 / J-10-fl).